We begin with the raw amino-acid sequence, 413 residues long: S-adenosylmethionine synthase (413 aa).

His15 is a binding site for ATP. A Mg(2+)-binding site is contributed by Asp17. Residue Glu43 participates in K(+) binding. L-methionine is bound by residues Glu56 and Gln100. A flexible loop region spans residues 100–110 (QSPDISQGVNE). ATP contacts are provided by residues 171–173 (DGK), 248–249 (KF), Asp257, 263–264 (RK), Ala280, and Lys284. Asp257 is a binding site for L-methionine. Lys288 serves as a coordination point for L-methionine.

This sequence belongs to the AdoMet synthase family. In terms of assembly, homotetramer; dimer of dimers. The cofactor is Mg(2+). It depends on K(+) as a cofactor.

The protein resides in the cytoplasm. It catalyses the reaction L-methionine + ATP + H2O = S-adenosyl-L-methionine + phosphate + diphosphate. Its pathway is amino-acid biosynthesis; S-adenosyl-L-methionine biosynthesis; S-adenosyl-L-methionine from L-methionine: step 1/1. Its function is as follows. Catalyzes the formation of S-adenosylmethionine (AdoMet) from methionine and ATP. The overall synthetic reaction is composed of two sequential steps, AdoMet formation and the subsequent tripolyphosphate hydrolysis which occurs prior to release of AdoMet from the enzyme. In Prochlorococcus marinus (strain AS9601), this protein is S-adenosylmethionine synthase.